Consider the following 487-residue polypeptide: Serine/threonine-protein kinase 4 (487 aa).

M1 is modified (N-acetylmethionine). A Phosphothreonine modification is found at T3. A Protein kinase domain is found at 30–281 (FDVLEKLGEG…ATQLLQHPFV (252 aa)). ATP contacts are provided by residues 36–44 (LGEGSYGSV) and K59. The Proton acceptor role is filled by D149. T183 carries the phosphothreonine; by autocatalysis modification. S265 bears the Phosphoserine mark. Residues 290–310 (LRDLINEAMDVKLKRQESQQR) are a coiled coil. The segment covering 303–312 (KRQESQQREV) has biased composition (basic and acidic residues). Residues 303 to 332 (KRQESQQREVDQDDEENSEEDEMDSGTMVR) are disordered. Residues 313-326 (DQDDEENSEEDEMD) show a composition bias toward acidic residues. S320 carries the phosphoserine modification. A phosphothreonine mark is found at T340 and T367. T387 is subject to Phosphothreonine; by PKB/AKT1. S410 and S414 each carry phosphoserine. Y433 carries the phosphotyrosine modification. One can recognise an SARAH domain in the interval 433–480 (YEFLKSWTVEDLQKRLLALDPMMEQEIEEIRQKYQSKRQPILDAIEAK).

This sequence belongs to the protein kinase superfamily. STE Ser/Thr protein kinase family. STE20 subfamily. In terms of assembly, homodimer; mediated via the coiled-coil region. Interacts with NORE1, which inhibits autoactivation. Interacts with and stabilizes SAV1. Interacts with RASSF1. Interacts with FOXO3. Interacts with RASSF2 (via SARAH domain). Interacts with AR, PKB/AKT1, TNNI3 and SIRT1. Interacts with DLG5 (via PDZ domain 3). Interacts with MARK3 and SCRIB in the presence of DLG5. The cofactor is Mg(2+). Autophosphorylated on serine and threonine residues. Phosphorylation at Thr-387 by PKB/AKT1, leads to inhibition of its: kinase activity, nuclear translocation and autophosphorylation at Thr-183. It also diminishes its cleavage by caspases and its ability to phosphorylate FOXO3. Post-translationally, proteolytically cleaved by caspase-3 during apoptosis at Asp-326 and Asp-349 resulting in a 37 kDa or a 39 kDa subunit respectively. The 39 kDa subunit is further cleaved into the 37 kDa form. Proteolytic cleavage results in kinase activation and nuclear translocation of the truncated form (MST1/N). It is less likely that cleavage at Asp-349 is a prerequisite for activation as this site is not conserved in the murine ortholog.

Its subcellular location is the cytoplasm. It localises to the nucleus. It catalyses the reaction L-seryl-[protein] + ATP = O-phospho-L-seryl-[protein] + ADP + H(+). The catalysed reaction is L-threonyl-[protein] + ATP = O-phospho-L-threonyl-[protein] + ADP + H(+). With respect to regulation, inhibited by the C-terminal non-catalytic region. Activated by caspase-cleavage. Full activation also requires homodimerization and autophosphorylation of Thr-183. Activated by RASSF1 which acts by preventing its dephosphorylation. Functionally, stress-activated, pro-apoptotic kinase which, following caspase-cleavage, enters the nucleus and induces chromatin condensation followed by internucleosomal DNA fragmentation. Key component of the Hippo signaling pathway which plays a pivotal role in organ size control and tumor suppression by restricting proliferation and promoting apoptosis. The core of this pathway is composed of a kinase cascade wherein STK3/MST2 and STK4/MST1, in complex with its regulatory protein SAV1, phosphorylates and activates LATS1/2 in complex with its regulatory protein MOB1, which in turn phosphorylates and inactivates YAP1 oncoprotein and WWTR1/TAZ. Phosphorylation of YAP1 by LATS2 inhibits its translocation into the nucleus to regulate cellular genes important for cell proliferation, cell death, and cell migration. STK3/MST2 and STK4/MST1 are required to repress proliferation of mature hepatocytes, to prevent activation of facultative adult liver stem cells (oval cells), and to inhibit tumor formation. Phosphorylates 'Ser-14' of histone H2B (H2BS14ph) during apoptosis. Phosphorylates FOXO3 upon oxidative stress, which results in its nuclear translocation and cell death initiation. Phosphorylates MOBKL1A, MOBKL1B and RASSF2. Phosphorylates TNNI3 (cardiac Tn-I) and alters its binding affinity to TNNC1 (cardiac Tn-C) and TNNT2 (cardiac Tn-T). Phosphorylates FOXO1 on 'Ser-212' and regulates its activation and stimulates transcription of PMAIP1 in a FOXO1-dependent manner. Phosphorylates SIRT1 and inhibits SIRT1-mediated p53/TP53 deacetylation, thereby promoting p53/TP53 dependent transcription and apoptosis upon DNA damage. Acts as an inhibitor of PKB/AKT1. Phosphorylates AR on 'Ser-650' and suppresses its activity by intersecting with PKB/AKT1 signaling and antagonizing formation of AR-chromatin complexes. This chain is Serine/threonine-protein kinase 4 (STK4), found in Colobus guereza (Mantled guereza).